We begin with the raw amino-acid sequence, 124 residues long: UPF0235 protein (124 aa).

Residues 1-22 (MTKKGSSNSSKQQQQQQQIIIN) form a disordered region.

This sequence belongs to the UPF0235 family.

The sequence is that of UPF0235 protein from Dictyostelium discoideum (Social amoeba).